The sequence spans 413 residues: Eukaryotic initiation factor 4A-7 (413 aa).

Positions 40–68 (DSFDAMGLQENLLRGIYAYGFEKPSAIQQ) match the Q motif motif. Residues 71-241 (IVPFCKGLDV…RKFMNKPVRI (171 aa)) enclose the Helicase ATP-binding domain. An ATP-binding site is contributed by 84–91 (AQSGTGKT). Residues 189-192 (DEAD) carry the DEAD box motif. Positions 252 to 413 (GIKQFYVNVD…ELPANVADLL (162 aa)) constitute a Helicase C-terminal domain.

The protein belongs to the DEAD box helicase family. eIF4A subfamily. As to quaternary structure, eIF4F is a multi-subunit complex, the composition of which varies with external and internal environmental conditions. It is composed of at least EIF4A, EIF4E and EIF4G.

It carries out the reaction ATP + H2O = ADP + phosphate + H(+). Functionally, ATP-dependent RNA helicase which is a subunit of the eIF4F complex involved in cap recognition and is required for mRNA binding to ribosome. In the current model of translation initiation, eIF4A unwinds RNA secondary structures in the 5'-UTR of mRNAs which is necessary to allow efficient binding of the small ribosomal subunit, and subsequent scanning for the initiator codon. In Nicotiana tabacum (Common tobacco), this protein is Eukaryotic initiation factor 4A-7.